The following is a 240-amino-acid chain: Ubiquinone biosynthesis O-methyltransferase (240 aa).

Residues Arg-44, Gly-64, Asp-85, and Met-129 each contribute to the S-adenosyl-L-methionine site.

Belongs to the methyltransferase superfamily. UbiG/COQ3 family.

The catalysed reaction is a 3-demethylubiquinol + S-adenosyl-L-methionine = a ubiquinol + S-adenosyl-L-homocysteine + H(+). It catalyses the reaction a 3-(all-trans-polyprenyl)benzene-1,2-diol + S-adenosyl-L-methionine = a 2-methoxy-6-(all-trans-polyprenyl)phenol + S-adenosyl-L-homocysteine + H(+). The protein operates within cofactor biosynthesis; ubiquinone biosynthesis. O-methyltransferase that catalyzes the 2 O-methylation steps in the ubiquinone biosynthetic pathway. The polypeptide is Ubiquinone biosynthesis O-methyltransferase (Escherichia fergusonii (strain ATCC 35469 / DSM 13698 / CCUG 18766 / IAM 14443 / JCM 21226 / LMG 7866 / NBRC 102419 / NCTC 12128 / CDC 0568-73)).